The primary structure comprises 411 residues: Creatinase (411 aa).

His-240 is an active-site residue.

It belongs to the peptidase M24 family. Creatinase subfamily. In terms of assembly, homodimer.

It carries out the reaction creatine + H2O = sarcosine + urea. The polypeptide is Creatinase (Bacillus sp. (strain B-0618)).